We begin with the raw amino-acid sequence, 404 residues long: Multidrug resistance protein MdtG (404 aa).

11 helical membrane-spanning segments follow: residues 19–39 (LGCFLTGAAFSLVMPFLPLYV), 56–76 (LVFSITFLFSAIASPFWGGLA), 90–110 (LGMAIVMLLMGMAQNIWQFLI), 113–133 (ALLGLLGGFIPNANALIATQV), 144–164 (TLSTGGVSGALLGPLAGGLLA), 171–191 (PVFFITASVLFICFLLTFFFI), 222–242 (LFVTTLIIQVATGSIAPILTL), 254–274 (IAFISGMIASVPGVAALLSAP), 288–308 (ILIVALIISVLLLIPMSFVQT), 317–337 (FLLGAADGALLPAVQTLLVYN), and 376–396 (AVFCVTAGVVLFNAIYSWNSL).

It belongs to the major facilitator superfamily. DHA1 family. MdtG (TC 2.A.1.2.20) subfamily.

It is found in the cell inner membrane. The polypeptide is Multidrug resistance protein MdtG (Salmonella heidelberg (strain SL476)).